The chain runs to 226 residues: UPF0758 protein PSEEN5431 (226 aa).

An MPN domain is found at 102–224 (VMDNPLAVRR…PLSMIEHGWL (123 aa)). 3 residues coordinate Zn(2+): histidine 173, histidine 175, and aspartate 186. The JAMM motif motif lies at 173–186 (HNHPSGNCEPSQDD).

Belongs to the UPF0758 family.

The protein is UPF0758 protein PSEEN5431 of Pseudomonas entomophila (strain L48).